The chain runs to 170 residues: Large ribosomal subunit protein uL5 (170 aa).

The protein belongs to the universal ribosomal protein uL5 family. In terms of assembly, part of the 50S ribosomal subunit; contacts the 5S rRNA and probably tRNA. Forms a bridge to the 30S subunit in the 70S ribosome.

In terms of biological role, this is one of the proteins that bind and probably mediate the attachment of the 5S RNA into the large ribosomal subunit, where it forms part of the central protuberance. In the 70S ribosome it contacts protein S13 of the 30S subunit (bridge B1b), connecting the 2 subunits; this bridge is implicated in subunit movement. May contact the P site tRNA; the 5S rRNA and some of its associated proteins might help stabilize positioning of ribosome-bound tRNAs. In Methanobrevibacter smithii (strain ATCC 35061 / DSM 861 / OCM 144 / PS), this protein is Large ribosomal subunit protein uL5.